A 156-amino-acid polypeptide reads, in one-letter code: ATP synthase subunit b (156 aa).

Residues 7–27 (LFVQAIVFLILVLFTMKFVWP) traverse the membrane as a helical segment.

Belongs to the ATPase B chain family. F-type ATPases have 2 components, F(1) - the catalytic core - and F(0) - the membrane proton channel. F(1) has five subunits: alpha(3), beta(3), gamma(1), delta(1), epsilon(1). F(0) has three main subunits: a(1), b(2) and c(10-14). The alpha and beta chains form an alternating ring which encloses part of the gamma chain. F(1) is attached to F(0) by a central stalk formed by the gamma and epsilon chains, while a peripheral stalk is formed by the delta and b chains.

The protein resides in the cell inner membrane. Its function is as follows. F(1)F(0) ATP synthase produces ATP from ADP in the presence of a proton or sodium gradient. F-type ATPases consist of two structural domains, F(1) containing the extramembraneous catalytic core and F(0) containing the membrane proton channel, linked together by a central stalk and a peripheral stalk. During catalysis, ATP synthesis in the catalytic domain of F(1) is coupled via a rotary mechanism of the central stalk subunits to proton translocation. Functionally, component of the F(0) channel, it forms part of the peripheral stalk, linking F(1) to F(0). This chain is ATP synthase subunit b, found in Delftia acidovorans (strain DSM 14801 / SPH-1).